We begin with the raw amino-acid sequence, 210 residues long: Imidazole glycerol phosphate synthase subunit HisH (210 aa).

Residues 7–210 (KVVIIDTGCA…SQLIKNFLEM (204 aa)) form the Glutamine amidotransferase type-1 domain. Cys-82 functions as the Nucleophile in the catalytic mechanism. Catalysis depends on residues His-192 and Glu-194.

In terms of assembly, heterodimer of HisH and HisF.

Its subcellular location is the cytoplasm. The catalysed reaction is 5-[(5-phospho-1-deoxy-D-ribulos-1-ylimino)methylamino]-1-(5-phospho-beta-D-ribosyl)imidazole-4-carboxamide + L-glutamine = D-erythro-1-(imidazol-4-yl)glycerol 3-phosphate + 5-amino-1-(5-phospho-beta-D-ribosyl)imidazole-4-carboxamide + L-glutamate + H(+). It catalyses the reaction L-glutamine + H2O = L-glutamate + NH4(+). Its pathway is amino-acid biosynthesis; L-histidine biosynthesis; L-histidine from 5-phospho-alpha-D-ribose 1-diphosphate: step 5/9. IGPS catalyzes the conversion of PRFAR and glutamine to IGP, AICAR and glutamate. The HisH subunit catalyzes the hydrolysis of glutamine to glutamate and ammonia as part of the synthesis of IGP and AICAR. The resulting ammonia molecule is channeled to the active site of HisF. The sequence is that of Imidazole glycerol phosphate synthase subunit HisH from Photobacterium profundum (strain SS9).